The chain runs to 279 residues: Ethanolamine utilization protein EutJ (279 aa).

This sequence belongs to the EutJ family.

It functions in the pathway amine and polyamine degradation; ethanolamine degradation. May protect ethanolamine ammonia-lyase (EAL, eutB-eutC) from inhibition, may function in assembling the bacterial microcompartment and/or in refolding EAL, suggesting it may have chaperone activity. Overexpression of eutJ and eutS in E.coli leads to multiple BMC-like structures; eutS expression alone leads to 1 BMC-like structure per cell. In terms of biological role, expression of the eut operon allows this bacteria to use ethanolamine (EA) as a carbon, nitrogen and energy source. It relies on cobalamin (vitamin B12) both as a cofactor for the ethanolamine ammonia-lyase (EAL) activity and to induce the operon. EA enhances bacterial survival in macrophages in a concentration-dependent manner, suggesting it is an important nutrient during infection. In Salmonella typhimurium (strain LT2 / SGSC1412 / ATCC 700720), this protein is Ethanolamine utilization protein EutJ.